A 177-amino-acid chain; its full sequence is Peptide methionine sulfoxide reductase MsrA (177 aa).

The active site involves Cys15.

This sequence belongs to the MsrA Met sulfoxide reductase family.

The enzyme catalyses L-methionyl-[protein] + [thioredoxin]-disulfide + H2O = L-methionyl-(S)-S-oxide-[protein] + [thioredoxin]-dithiol. It catalyses the reaction [thioredoxin]-disulfide + L-methionine + H2O = L-methionine (S)-S-oxide + [thioredoxin]-dithiol. In terms of biological role, has an important function as a repair enzyme for proteins that have been inactivated by oxidation. Catalyzes the reversible oxidation-reduction of methionine sulfoxide in proteins to methionine. The sequence is that of Peptide methionine sulfoxide reductase MsrA from Mycobacterium leprae (strain Br4923).